A 315-amino-acid polypeptide reads, in one-letter code: MANLKSIRDRIQSVKNTQKITEAMRLVAAAKVRRAQEQVIATRPFADRLAQVLYGLQARLRFEEANLPLLRRREVKKVALLVVSGDRGLCGAYNTNVIKRAAERSKELKAEGIDYTFVLVGRKAIQYFQRREQPIDATYTGLEQVPTAAEASQIADELLSLFLSESVDRVELVYTKFVSLISSRPVVQTLLPLDPQGLEAQDDEIFRLTTRGGRFEVQREKVSSATQSMPQDMIFEQDPLQILDALLPLYLNNQLLRALQESAASELAARMTAMNNASDNAKELIKGLSMTYNKARQAAITQEILEVVGGAEALK.

This sequence belongs to the ATPase gamma chain family. F-type ATPases have 2 components, CF(1) - the catalytic core - and CF(0) - the membrane proton channel. CF(1) has five subunits: alpha(3), beta(3), gamma(1), delta(1), epsilon(1). CF(0) has three main subunits: a, b and c.

Its subcellular location is the cellular thylakoid membrane. Produces ATP from ADP in the presence of a proton gradient across the membrane. The gamma chain is believed to be important in regulating ATPase activity and the flow of protons through the CF(0) complex. This chain is ATP synthase gamma chain, found in Cyanothece sp. (strain PCC 7425 / ATCC 29141).